Reading from the N-terminus, the 388-residue chain is P2X purinoceptor 4 (388 aa).

At 1–33 the chain is on the cytoplasmic side; sequence MAGCCAALAAFLFEYDTPRIVLIRSRKVGLMNR. A helical transmembrane segment spans residues 34 to 54; the sequence is AVQLLILAYVIGWVFVWEKGY. Topologically, residues 55 to 338 are extracellular; it reads QETDSVVSSV…KFDIIPTMIN (284 aa). 2 residues coordinate ATP: Lys67 and Lys69. 2 residues coordinate CTP: Lys67 and Lys69. Asn75 and Asn110 each carry an N-linked (GlcNAc...) asparagine glycan. Cystine bridges form between Cys116–Cys165, Cys126–Cys149, and Cys132–Cys159. Asn153 and Asn184 each carry an N-linked (GlcNAc...) asparagine glycan. ATP contacts are provided by Thr186 and Leu188. Thr186 contacts CTP. 2 N-linked (GlcNAc...) asparagine glycosylation sites follow: Asn199 and Asn208. Cystine bridges form between Cys217–Cys227 and Cys261–Cys270. Residues Asn293, Arg295, and Lys313 each coordinate ATP. CTP is bound by residues Asn293, Arg295, and Lys313. Residues 339 to 359 form a helical membrane-spanning segment; that stretch reads IGSGLALLGMATVLCDIIVLY. The Cytoplasmic portion of the chain corresponds to 360–388; it reads CMKKRLYYREKKYKYVEDYEQGLASELDQ.

This sequence belongs to the P2X receptor family. Functional P2RXs are organized as homomeric and heteromeric trimers. Forms heterotrimer with P2RX1. Interacts with P2RX7 (via C-terminus); this interaction is functional only in the presence of ATP. Forms heterotrimer with P2RX4; functional differences between homomeric P2RX4 and P2RX4/6 heterotrimer are minor. Interacts with AP1M2.

Its subcellular location is the cell membrane. The protein localises to the lysosome membrane. The enzyme catalyses K(+)(in) = K(+)(out). It carries out the reaction Na(+)(in) = Na(+)(out). The catalysed reaction is Ca(2+)(in) = Ca(2+)(out). With respect to regulation, activated by ATP. pH-dependent and inhibited by acidic pH. Functionally, ATP-gated nonselective transmembrane cation channel permeable to potassium, sodium and calcium. CTP, but not GTP or UTP, functions as a weak affinity agonist for P2RX4. Activated by extracellularly released ATP, it plays multiple role in immunity and central nervous system physiology. Plays a key role in initial steps of T-cell activation and Ca(2+) microdomain formation. Also participates in basal T-cell activity without TCR/CD3 stimulation. Promotes the differentiation and activation of Th17 cells via expression of retinoic acid-related orphan receptor C/RORC. Upon activation, drives microglia motility via the PI3K/Akt pathway. Could also function as an ATP-gated cation channel of lysosomal membranes. This Homo sapiens (Human) protein is P2X purinoceptor 4 (P2RX4).